A 222-amino-acid chain; its full sequence is Protein MKS1 (222 aa).

Positions 1-61 are disordered; the sequence is MDPSEYFAGG…PNRDQPPPYI (61 aa). A compositionally biased stretch (polar residues) spans 12–21; that stretch reads PSDQQNQKRQ. Phosphoserine is present on Ser-30. Residues 37–46 are compositionally biased toward basic residues; sequence DSHKIKKPPK. A compositionally biased stretch (pro residues) spans 47 to 61; it reads HPAPPPNRDQPPPYI. Ser-72 is subject to Phosphoserine. The VQ signature appears at 83 to 92; it reads FMNVVQRLTG. The disordered stretch occupies residues 105–130; the sequence is GDVSPAARLASTENASPRGGKEPAAR. Ser-108 and Ser-120 each carry phosphoserine.

As to quaternary structure, interacts with MPK4, WRKY25 and WRKY33. Post-translationally, phosphorylated on serine residue by MPK4.

The protein localises to the nucleus. In terms of biological role, regulator of plant defense response. May contribute to MPK4-regulated defense activation by coupling the kinase to specific WRKY transcription factors. The chain is Protein MKS1 (MKS1) from Arabidopsis thaliana (Mouse-ear cress).